The chain runs to 271 residues: PH domain-containing protein ECU06_0670 (271 aa).

Residues 26–145 (AKKTLDSSES…EKKNDAFIPP (120 aa)) are disordered. 3 stretches are compositionally biased toward basic and acidic residues: residues 42-64 (EVGEVDEVKGMETDAEKKDEPAM), 92-120 (QPEKQEAADGEDSSKKESPREEQTPLLDK), and 128-140 (EENAKPSSEKKND). The region spanning 166-267 (NTVVEGWMWK…WVEKLNETIR (102 aa)) is the PH domain.

This Encephalitozoon cuniculi (strain GB-M1) (Microsporidian parasite) protein is PH domain-containing protein ECU06_0670.